The sequence spans 195 residues: NADH-quinone oxidoreductase subunit I (195 aa).

4Fe-4S ferredoxin-type domains are found at residues 44–74 (LNRY…VEGA) and 90–119 (QVYQ…MTNE). Residues cysteine 54, cysteine 57, cysteine 60, cysteine 64, cysteine 99, cysteine 102, cysteine 105, and cysteine 109 each contribute to the [4Fe-4S] cluster site. A disordered region spans residues 145–195 (MTAPPHALRPGTTQDDYYRGDITAVPEQAAPEQAAPEQPAPEREPNPETEK). Residues 168–181 (AVPEQAAPEQAAPE) are compositionally biased toward low complexity. The segment covering 184–195 (APEREPNPETEK) has biased composition (basic and acidic residues).

The protein belongs to the complex I 23 kDa subunit family. In terms of assembly, NDH-1 is composed of 14 different subunits. Subunits NuoA, H, J, K, L, M, N constitute the membrane sector of the complex. [4Fe-4S] cluster is required as a cofactor.

The protein resides in the cell membrane. The catalysed reaction is a quinone + NADH + 5 H(+)(in) = a quinol + NAD(+) + 4 H(+)(out). In terms of biological role, NDH-1 shuttles electrons from NADH, via FMN and iron-sulfur (Fe-S) centers, to quinones in the respiratory chain. The immediate electron acceptor for the enzyme in this species is believed to be ubiquinone. Couples the redox reaction to proton translocation (for every two electrons transferred, four hydrogen ions are translocated across the cytoplasmic membrane), and thus conserves the redox energy in a proton gradient. The chain is NADH-quinone oxidoreductase subunit I from Rhodococcus erythropolis (strain PR4 / NBRC 100887).